A 265-amino-acid chain; its full sequence is Dimethylsulfide dehydrogenase subunit gamma (265 aa).

The first 25 residues, 1 to 25 (MPGFRFLLAATAAFLATSPALPLSA), serve as a signal peptide directing secretion. Residues histidine 81 and methionine 147 each coordinate heme b.

Heterotrimer of alpha, beta and gamma subunits. Heme b serves as cofactor.

The protein resides in the periplasm. Functionally, may transfer electrons to the iron-sulfur centers of DdhB. The sequence is that of Dimethylsulfide dehydrogenase subunit gamma (ddhC) from Rhodovulum sulfidophilum (Rhodobacter sulfidophilus).